We begin with the raw amino-acid sequence, 660 residues long: Bifunctional polymyxin resistance protein ArnA (660 aa).

Residues 1 to 304 (MKTVVFAYHD…TLGLVQGSRL (304 aa)) form a formyltransferase ArnAFT region. A (6R)-10-formyltetrahydrofolate-binding site is contributed by 86 to 88 (HLI). Residue histidine 104 is the Proton donor; for formyltransferase activity of the active site. (6R)-10-formyltetrahydrofolate is bound by residues arginine 114 and 136–140 (VKRAD). The segment at 314–660 (RRTRVLILGV…RTVDLTDKPS (347 aa)) is dehydrogenase ArnADH. NAD(+)-binding positions include aspartate 347 and 368–369 (DI). UDP-alpha-D-glucuronate is bound by residues alanine 393, tyrosine 398, and 432 to 433 (TS). Glutamate 434 (proton acceptor; for decarboxylase activity) is an active-site residue. UDP-alpha-D-glucuronate-binding positions include arginine 460, asparagine 492, 526–535 (KLIDGGKQKR), and tyrosine 613. The Proton donor; for decarboxylase activity role is filled by arginine 619.

The protein in the N-terminal section; belongs to the Fmt family. UDP-L-Ara4N formyltransferase subfamily. It in the C-terminal section; belongs to the NAD(P)-dependent epimerase/dehydratase family. UDP-glucuronic acid decarboxylase subfamily. As to quaternary structure, homohexamer, formed by a dimer of trimers.

It catalyses the reaction UDP-alpha-D-glucuronate + NAD(+) = UDP-beta-L-threo-pentopyranos-4-ulose + CO2 + NADH. It carries out the reaction UDP-4-amino-4-deoxy-beta-L-arabinose + (6R)-10-formyltetrahydrofolate = UDP-4-deoxy-4-formamido-beta-L-arabinose + (6S)-5,6,7,8-tetrahydrofolate + H(+). It participates in nucleotide-sugar biosynthesis; UDP-4-deoxy-4-formamido-beta-L-arabinose biosynthesis; UDP-4-deoxy-4-formamido-beta-L-arabinose from UDP-alpha-D-glucuronate: step 1/3. The protein operates within nucleotide-sugar biosynthesis; UDP-4-deoxy-4-formamido-beta-L-arabinose biosynthesis; UDP-4-deoxy-4-formamido-beta-L-arabinose from UDP-alpha-D-glucuronate: step 3/3. Its pathway is bacterial outer membrane biogenesis; lipopolysaccharide biosynthesis. Bifunctional enzyme that catalyzes the oxidative decarboxylation of UDP-glucuronic acid (UDP-GlcUA) to UDP-4-keto-arabinose (UDP-Ara4O) and the addition of a formyl group to UDP-4-amino-4-deoxy-L-arabinose (UDP-L-Ara4N) to form UDP-L-4-formamido-arabinose (UDP-L-Ara4FN). The modified arabinose is attached to lipid A and is required for resistance to polymyxin and cationic antimicrobial peptides. The polypeptide is Bifunctional polymyxin resistance protein ArnA (Escherichia coli O157:H7).